The following is a 197-amino-acid chain: GTP cyclohydrolase-2 (197 aa).

50 to 54 (RIHSE) serves as a coordination point for GTP. Residues cysteine 55, cysteine 66, and cysteine 68 each contribute to the Zn(2+) site. Residues glutamine 71, 93–95 (EGR), and threonine 115 contribute to the GTP site. Aspartate 127 serves as the catalytic Proton acceptor. The Nucleophile role is filled by arginine 129. Positions 150 and 155 each coordinate GTP.

The protein belongs to the GTP cyclohydrolase II family. Zn(2+) is required as a cofactor.

It carries out the reaction GTP + 4 H2O = 2,5-diamino-6-hydroxy-4-(5-phosphoribosylamino)-pyrimidine + formate + 2 phosphate + 3 H(+). It participates in cofactor biosynthesis; riboflavin biosynthesis; 5-amino-6-(D-ribitylamino)uracil from GTP: step 1/4. In terms of biological role, catalyzes the conversion of GTP to 2,5-diamino-6-ribosylamino-4(3H)-pyrimidinone 5'-phosphate (DARP), formate and pyrophosphate. The polypeptide is GTP cyclohydrolase-2 (Neisseria meningitidis serogroup A / serotype 4A (strain DSM 15465 / Z2491)).